The primary structure comprises 396 residues: MVKNFNYMFVANILSALCKFLILLVIVRLGTPEDVGRYNYALVITAPIFLFISLKIRSVIVTNDKYSPNEYISAILSLNIITLIFVAIFVYVLGNGDLTTILIVSLIKLFENIKEVPYGIYQKNESLKLLGISMGIYNILSLILFYIIYSFSHNLNMALLFLVISCIFSFAIIDRWYLSKYYNIKLHYNNNIAKFKEIFILTIPLAFSSALGSLNTGIPRIVLENLFGKYTLGIFSTIAYVLVIGGLFANSISQVFLPKLRKLYKDEKKIEFEKLTRKMVFIGIFIGMCSVILSLFLGEALLSLLFGKEYGENNIILIILSFGLLFILSGIFLGTTIIATGKYNVNYKISLILLFCILIFSFLLIPKYSLLGAALTITISQFVALISYYYFYKRIF.

Helical transmembrane passes span 7–27, 41–61, 74–94, 101–121, 129–149, 153–173, 198–218, 232–252, 279–299, 315–335, 351–371, and 372–392; these read YMFV…LVIV, ALVI…SVIV, AILS…YVLG, ILIV…YGIY, LLGI…YIIY, HNLN…FAII, IFIL…NTGI, LGIF…ANSI, MVFI…FLGE, IILI…FLGT, LILL…YSLL, and GAAL…YYFY.

This sequence belongs to the polysaccharide synthase family.

It localises to the cell membrane. It functions in the pathway capsule biogenesis; capsule polysaccharide biosynthesis. In terms of biological role, required for the biosynthesis of type 1 capsular polysaccharide. In Staphylococcus aureus, this protein is Capsular polysaccharide biosynthesis protein CapF (capF).